The following is a 310-amino-acid chain: MTEQILERTKAQQYNFNKLQKRIRRNTGQAIADFNMIEDGDRIMVCLSGGKDSFTMLDILMSLQKSAPISFSLVAVNLDQKQPGFPAHVLPEYLESLGVEYKIVEEDTYSIVQDKIPEGKTTCSLCSRLRRGILYRTAKELGATKIALGHHRDDILETLFLNMFYGGKMKGMPPKLVSDNGEHVVIRPLAYCREKDIIKYSDMAGYPIIPCNLCGSQPNLQRQNIKQMLNDWDKRFPGRIETMFRAMQNVVPSHLADFELFDFKSINKDSGVINGGDIGFDKEEMPVATVEDEDMVQEFDPSLKLDVTNI.

Positions 48 to 53 (SGGKDS) match the PP-loop motif motif. Cys123, Cys126, and Cys214 together coordinate [4Fe-4S] cluster.

This sequence belongs to the TtcA family. Homodimer. It depends on Mg(2+) as a cofactor. Requires [4Fe-4S] cluster as cofactor.

Its subcellular location is the cytoplasm. The enzyme catalyses cytidine(32) in tRNA + S-sulfanyl-L-cysteinyl-[cysteine desulfurase] + AH2 + ATP = 2-thiocytidine(32) in tRNA + L-cysteinyl-[cysteine desulfurase] + A + AMP + diphosphate + H(+). The protein operates within tRNA modification. Catalyzes the ATP-dependent 2-thiolation of cytidine in position 32 of tRNA, to form 2-thiocytidine (s(2)C32). The sulfur atoms are provided by the cysteine/cysteine desulfurase (IscS) system. This Vibrio vulnificus (strain YJ016) protein is tRNA-cytidine(32) 2-sulfurtransferase.